We begin with the raw amino-acid sequence, 494 residues long: ATP synthase subunit beta, plastid (494 aa).

169 to 176 provides a ligand contact to ATP; that stretch reads GGAGVGKT.

Belongs to the ATPase alpha/beta chains family. As to quaternary structure, F-type ATPases have 2 components, CF(1) - the catalytic core - and CF(0) - the membrane proton channel. CF(1) has five subunits: alpha(3), beta(3), gamma(1), delta(1), epsilon(1). CF(0) has four main subunits: a(1), b(1), b'(1) and c(9-12).

It is found in the plastid thylakoid membrane. It carries out the reaction ATP + H2O + 4 H(+)(in) = ADP + phosphate + 5 H(+)(out). Produces ATP from ADP in the presence of a proton gradient across the membrane. The catalytic sites are hosted primarily by the beta subunits. The chain is ATP synthase subunit beta, plastid (atpB) from Cuscuta gronovii (Common dodder).